The chain runs to 135 residues: uncharacterized protein (135 aa).

A VOC domain is found at 4–129 (SIVHIALVVN…YGNLWDLLQL (126 aa)).

The protein to B.subtilis YwkD.

This is an uncharacterized protein from Shewanella frigidimarina (strain NCIMB 400).